Reading from the N-terminus, the 181-residue chain is ADP-ribosylation factor 2 (181 aa).

A lipid anchor (N-myristoyl glycine) is attached at Gly2. GTP-binding positions include 24 to 31 (GLDAAGKT), 67 to 71 (DVGGQ), and 126 to 129 (NKQD).

The protein belongs to the small GTPase superfamily. Arf family.

It is found in the golgi apparatus. GTP-binding protein that functions as an allosteric activator of the cholera toxin catalytic subunit, an ADP-ribosyltransferase. Involved in protein trafficking; may modulate vesicle budding and uncoating within the Golgi apparatus. This is ADP-ribosylation factor 2 (ARF2) from Bos taurus (Bovine).